The primary structure comprises 1483 residues: ABC multidrug transporter atrA (1483 aa).

Residues 1-19 (MASHKKSEDPLVVKDRQEQ) show a composition bias toward basic and acidic residues. The disordered stretch occupies residues 1 to 92 (MASHKKSEDP…NDPAVDPQGP (92 aa)). N-linked (GlcNAc...) asparagine glycosylation occurs at Asn32. Polar residues predominate over residues 71–82 (PTRTSTLATISE). Residues Asn123 and Asn322 are each glycosylated (N-linked (GlcNAc...) asparagine). In terms of domain architecture, ABC transporter 1 spans 147–398 (FRIGEMMKNR…FERQGWECPQ (252 aa)). 5 consecutive transmembrane segments (helical) span residues 512-532 (TVST…VFYG), 539-559 (GFTA…LIAM), 595-615 (IPVK…LAGL), 620-640 (GQFF…SAVF), and 654-674 (MGLA…VLPV). N-linked (GlcNAc...) asparagine glycosylation is present at Asn718. The chain crosses the membrane as a helical span at residues 759-779 (FGILIAFLVGFMMIYFIATEL). Asn780 is a glycosylation site (N-linked (GlcNAc...) asparagine). Positions 840-1083 (FTWRDVCYDI…LLNYFESNGA (244 aa)) constitute an ABC transporter 2 domain. Position 876-883 (876-883 (GVSGAGKT)) interacts with ATP. Asn947 and Asn1146 each carry an N-linked (GlcNAc...) asparagine glycan. 5 helical membrane-spanning segments follow: residues 1179 to 1199 (YIAS…FSFF), 1215 to 1235 (LFML…LFVT), 1254 to 1274 (AFLI…GILT), 1293 to 1313 (LVLL…HMAI), and 1320 to 1340 (ETAS…CGVM). Asn1413 is a glycosylation site (N-linked (GlcNAc...) asparagine). A helical membrane pass occupies residues 1444 to 1464 (FGLMWVYIVFNIFLATMLYYT). Asn1471 carries N-linked (GlcNAc...) asparagine glycosylation.

Belongs to the ABC transporter superfamily. ABCG family. PDR (TC 3.A.1.205) subfamily.

Its subcellular location is the cell membrane. The catalysed reaction is (R)-miconazole(in) + ATP + H2O = (R)-miconazole(out) + ADP + phosphate + H(+). In terms of biological role, pleiotropic ABC efflux transporter involved in the basal level of azole susceptibility. Confers resistance to miconazole and clotrimazole. The sequence is that of ABC multidrug transporter atrA from Aspergillus oryzae (strain ATCC 42149 / RIB 40) (Yellow koji mold).